The primary structure comprises 465 residues: Ribulose bisphosphate carboxylase large chain (465 aa).

An N6,N6,N6-trimethyllysine modification is found at lysine 4. 2 residues coordinate substrate: asparagine 113 and threonine 163. Lysine 165 functions as the Proton acceptor in the catalytic mechanism. Position 167 (lysine 167) interacts with substrate. Residues lysine 191, aspartate 193, and glutamate 194 each coordinate Mg(2+). Lysine 191 is subject to N6-carboxylysine. Residue histidine 284 is the Proton acceptor of the active site. Residues arginine 285, histidine 317, and serine 369 each contribute to the substrate site.

It belongs to the RuBisCO large chain family. Type I subfamily. In terms of assembly, heterohexadecamer of 8 large chains and 8 small chains; disulfide-linked. The disulfide link is formed within the large subunit homodimers. Requires Mg(2+) as cofactor. The disulfide bond which can form in the large chain dimeric partners within the hexadecamer appears to be associated with oxidative stress and protein turnover.

The protein localises to the plastid. Its subcellular location is the chloroplast. It catalyses the reaction 2 (2R)-3-phosphoglycerate + 2 H(+) = D-ribulose 1,5-bisphosphate + CO2 + H2O. The enzyme catalyses D-ribulose 1,5-bisphosphate + O2 = 2-phosphoglycolate + (2R)-3-phosphoglycerate + 2 H(+). In terms of biological role, ruBisCO catalyzes two reactions: the carboxylation of D-ribulose 1,5-bisphosphate, the primary event in carbon dioxide fixation, as well as the oxidative fragmentation of the pentose substrate in the photorespiration process. Both reactions occur simultaneously and in competition at the same active site. This Humiria balsamifera (Tauroniro) protein is Ribulose bisphosphate carboxylase large chain.